A 328-amino-acid chain; its full sequence is tRNA uridine(34) hydroxylase (328 aa).

A Rhodanese domain is found at 130–224 (LDKDTVVLDT…YGKDPEVQGE (95 aa)). The active-site Cysteine persulfide intermediate is the Cys184.

This sequence belongs to the TrhO family.

It carries out the reaction uridine(34) in tRNA + AH2 + O2 = 5-hydroxyuridine(34) in tRNA + A + H2O. Its function is as follows. Catalyzes oxygen-dependent 5-hydroxyuridine (ho5U) modification at position 34 in tRNAs. This Streptococcus pneumoniae serotype 19F (strain G54) protein is tRNA uridine(34) hydroxylase.